The following is a 315-amino-acid chain: Ribosomal RNA small subunit methyltransferase H (315 aa).

S-adenosyl-L-methionine is bound by residues 35–37 (GGH), aspartate 55, phenylalanine 80, aspartate 102, and glutamine 109.

This sequence belongs to the methyltransferase superfamily. RsmH family.

It localises to the cytoplasm. It catalyses the reaction cytidine(1402) in 16S rRNA + S-adenosyl-L-methionine = N(4)-methylcytidine(1402) in 16S rRNA + S-adenosyl-L-homocysteine + H(+). Specifically methylates the N4 position of cytidine in position 1402 (C1402) of 16S rRNA. This is Ribosomal RNA small subunit methyltransferase H from Buchnera aphidicola subsp. Baizongia pistaciae (strain Bp).